We begin with the raw amino-acid sequence, 236 residues long: Peptidyl-prolyl cis-trans isomerase CYP21-4 (236 aa).

A helical; Signal-anchor for type II membrane protein transmembrane segment spans residues 22 to 42 (ISISTIIVCNLVVAVVILSLV). Residues 52-71 (SRNTIEHETRSQRFEDTNTA) are disordered. The span at 54–67 (NTIEHETRSQRFED) shows a compositional bias: basic and acidic residues. Residues 82–232 (FADINTSKGL…SPIGITGVVL (151 aa)) enclose the PPIase cyclophilin-type domain. Asparagine 86 carries N-linked (GlcNAc...) asparagine glycosylation.

This sequence belongs to the cyclophilin-type PPIase family. Ubiquitous.

The protein localises to the membrane. It catalyses the reaction [protein]-peptidylproline (omega=180) = [protein]-peptidylproline (omega=0). PPIases accelerate the folding of proteins. It catalyzes the cis-trans isomerization of proline imidic peptide bonds in oligopeptides. This Arabidopsis thaliana (Mouse-ear cress) protein is Peptidyl-prolyl cis-trans isomerase CYP21-4 (CYP21-4).